Reading from the N-terminus, the 69-residue chain is MKNVVIFLIKLYQRYISPMKPRSCRFYPTCSQYSIEAISKYGLLKGGIMSIWRILRCNPFNPGGYDPVK.

The protein belongs to the UPF0161 family.

It localises to the cell membrane. Its function is as follows. Could be involved in insertion of integral membrane proteins into the membrane. The protein is Putative membrane protein insertion efficiency factor of Thermoanaerobacter pseudethanolicus (strain ATCC 33223 / 39E) (Clostridium thermohydrosulfuricum).